The sequence spans 554 residues: Intraflagellar transport protein 56 (554 aa).

Residues 1-27 (MMLSRAKPAVGGESPHTDKRKKKGRKI) form a disordered region. The span at 18–27 (DKRKKKGRKI) shows a compositional bias: basic residues. 4 TPR repeats span residues 57 to 90 (DDTNLWIGYCAFHLGDYKRALEEYENATKEENCN), 92 to 125 (EVWVNLACTYFFLGMYKQAEAAGFKAPKSRLQNR), 151 to 184 (KEDQLSLASIHYMRSHYQEAIDIYKRILLDNREY), and 468 to 501 (ANDCYKMGQFYYSAKAFDVLERLDPNPEYWEGKR).

It belongs to the IFT56 family. In terms of assembly, component of the IFT complex B. Interacts with IFT46; the interaction is direct. As to expression, high expression detected in testis. Detected also retina, kidney, lung and brain tissue. The expression level is low in spleen. Expressed in the developing liver. Present in the airway epithelial cells and the testes (at protein level).

The protein resides in the cell projection. The protein localises to the cilium. Its function is as follows. Component of the intraflagellar transport (IFT) complex B required for transport of proteins in the motile cilium. Required for transport of specific ciliary cargo proteins related to motility, while it is neither required for IFT complex B assembly or motion nor for cilium assembly. Required for efficient coupling between the accumulation of GLI2 and GLI3 at the ciliary tips and their dissociation from the negative regulator SUFU. Plays a key role in maintaining the integrity of the IFT complex B and the proper ciliary localization of the IFT complex B components. Not required for IFT complex A ciliary localization or function. Essential for maintaining proper microtubule organization within the ciliary axoneme. The polypeptide is Intraflagellar transport protein 56 (Mus musculus (Mouse)).